A 264-amino-acid chain; its full sequence is Thymidylate synthase (264 aa).

Arginine 21 serves as a coordination point for dUMP. Residue histidine 51 coordinates (6R)-5,10-methylene-5,6,7,8-tetrahydrofolate. 126 to 127 (RR) lines the dUMP pocket. Cysteine 146 (nucleophile) is an active-site residue. DUMP-binding positions include 166 to 169 (RSCD), asparagine 177, and 207 to 209 (HLY). Aspartate 169 is a binding site for (6R)-5,10-methylene-5,6,7,8-tetrahydrofolate. Alanine 263 contributes to the (6R)-5,10-methylene-5,6,7,8-tetrahydrofolate binding site.

It belongs to the thymidylate synthase family. Bacterial-type ThyA subfamily. Homodimer.

The protein resides in the cytoplasm. It carries out the reaction dUMP + (6R)-5,10-methylene-5,6,7,8-tetrahydrofolate = 7,8-dihydrofolate + dTMP. The protein operates within pyrimidine metabolism; dTTP biosynthesis. Catalyzes the reductive methylation of 2'-deoxyuridine-5'-monophosphate (dUMP) to 2'-deoxythymidine-5'-monophosphate (dTMP) while utilizing 5,10-methylenetetrahydrofolate (mTHF) as the methyl donor and reductant in the reaction, yielding dihydrofolate (DHF) as a by-product. This enzymatic reaction provides an intracellular de novo source of dTMP, an essential precursor for DNA biosynthesis. The polypeptide is Thymidylate synthase (Xenorhabdus nematophila (strain ATCC 19061 / DSM 3370 / CCUG 14189 / LMG 1036 / NCIMB 9965 / AN6)).